Reading from the N-terminus, the 457-residue chain is Serine--tRNA ligase (457 aa).

L-serine is bound at residue 252 to 254; the sequence is TAE. ATP contacts are provided by residues 283-285 and Val299; that span reads RKE. An L-serine-binding site is contributed by Glu306. 370–373 contacts ATP; sequence EMVS. Thr406 lines the L-serine pocket.

The protein belongs to the class-II aminoacyl-tRNA synthetase family. Type-1 seryl-tRNA synthetase subfamily. Homodimer. The tRNA molecule binds across the dimer.

The protein resides in the cytoplasm. It carries out the reaction tRNA(Ser) + L-serine + ATP = L-seryl-tRNA(Ser) + AMP + diphosphate + H(+). The enzyme catalyses tRNA(Sec) + L-serine + ATP = L-seryl-tRNA(Sec) + AMP + diphosphate + H(+). Its pathway is aminoacyl-tRNA biosynthesis; selenocysteinyl-tRNA(Sec) biosynthesis; L-seryl-tRNA(Sec) from L-serine and tRNA(Sec): step 1/1. Catalyzes the attachment of serine to tRNA(Ser). Is also able to aminoacylate tRNA(Sec) with serine, to form the misacylated tRNA L-seryl-tRNA(Sec), which will be further converted into selenocysteinyl-tRNA(Sec). The protein is Serine--tRNA ligase of Saccharolobus islandicus (strain Y.N.15.51 / Yellowstone #2) (Sulfolobus islandicus).